Consider the following 209-residue polypeptide: Guanylate kinase (209 aa).

Positions 9 to 188 (GIMLVISSPS…SVYQIKCIFT (180 aa)) constitute a Guanylate kinase-like domain. 16–23 (SPSGGGKT) contributes to the ATP binding site.

The protein belongs to the guanylate kinase family.

It is found in the cytoplasm. The catalysed reaction is GMP + ATP = GDP + ADP. Essential for recycling GMP and indirectly, cGMP. The protein is Guanylate kinase of Ehrlichia chaffeensis (strain ATCC CRL-10679 / Arkansas).